A 669-amino-acid polypeptide reads, in one-letter code: DNA ligase (669 aa).

Residues 33–37, 82–83, and Glu-114 each bind NAD(+); these read DAEYD and SL. Lys-116 acts as the N6-AMP-lysine intermediate in catalysis. Arg-137, Glu-174, Lys-291, and Lys-315 together coordinate NAD(+). Residues Cys-409, Cys-412, Cys-427, and Cys-433 each contribute to the Zn(2+) site. Residues 593–669 enclose the BRCT domain; sequence EIPQPLAGKV…QTEQDLLALL (77 aa).

This sequence belongs to the NAD-dependent DNA ligase family. LigA subfamily. Mg(2+) serves as cofactor. Requires Mn(2+) as cofactor.

The catalysed reaction is NAD(+) + (deoxyribonucleotide)n-3'-hydroxyl + 5'-phospho-(deoxyribonucleotide)m = (deoxyribonucleotide)n+m + AMP + beta-nicotinamide D-nucleotide.. Functionally, DNA ligase that catalyzes the formation of phosphodiester linkages between 5'-phosphoryl and 3'-hydroxyl groups in double-stranded DNA using NAD as a coenzyme and as the energy source for the reaction. It is essential for DNA replication and repair of damaged DNA. The chain is DNA ligase from Vibrio vulnificus (strain YJ016).